A 597-amino-acid chain; its full sequence is Arginine--tRNA ligase (597 aa).

Positions 138–148 (ANPTGPMHVGH) match the 'HIGH' region motif.

This sequence belongs to the class-I aminoacyl-tRNA synthetase family. Monomer.

It localises to the cytoplasm. It catalyses the reaction tRNA(Arg) + L-arginine + ATP = L-arginyl-tRNA(Arg) + AMP + diphosphate. The sequence is that of Arginine--tRNA ligase from Rhodopseudomonas palustris (strain HaA2).